Here is a 621-residue protein sequence, read N- to C-terminus: Chaperone protein HscA homolog (621 aa).

The protein belongs to the heat shock protein 70 family.

Its function is as follows. Chaperone involved in the maturation of iron-sulfur cluster-containing proteins. Has a low intrinsic ATPase activity which is markedly stimulated by HscB. The polypeptide is Chaperone protein HscA homolog (Cupriavidus pinatubonensis (strain JMP 134 / LMG 1197) (Cupriavidus necator (strain JMP 134))).